Reading from the N-terminus, the 321-residue chain is Aspartate carbamoyltransferase catalytic subunit (321 aa).

2 residues coordinate carbamoyl phosphate: Arg-65 and Thr-66. An L-aspartate-binding site is contributed by Lys-93. Positions 115, 143, and 146 each coordinate carbamoyl phosphate. Positions 176 and 230 each coordinate L-aspartate. Residues Gly-271 and Pro-272 each contribute to the carbamoyl phosphate site.

Belongs to the aspartate/ornithine carbamoyltransferase superfamily. ATCase family. In terms of assembly, heterododecamer (2C3:3R2) of six catalytic PyrB chains organized as two trimers (C3), and six regulatory PyrI chains organized as three dimers (R2).

It carries out the reaction carbamoyl phosphate + L-aspartate = N-carbamoyl-L-aspartate + phosphate + H(+). The protein operates within pyrimidine metabolism; UMP biosynthesis via de novo pathway; (S)-dihydroorotate from bicarbonate: step 2/3. Its function is as follows. Catalyzes the condensation of carbamoyl phosphate and aspartate to form carbamoyl aspartate and inorganic phosphate, the committed step in the de novo pyrimidine nucleotide biosynthesis pathway. In Bartonella tribocorum (strain CIP 105476 / IBS 506), this protein is Aspartate carbamoyltransferase catalytic subunit.